The following is a 245-amino-acid chain: Enolase-phosphatase E1 (245 aa).

Belongs to the HAD-like hydrolase superfamily. MasA/MtnC family. Monomer. The cofactor is Mg(2+).

The catalysed reaction is 5-methylsulfanyl-2,3-dioxopentyl phosphate + H2O = 1,2-dihydroxy-5-(methylsulfanyl)pent-1-en-3-one + phosphate. Its pathway is amino-acid biosynthesis; L-methionine biosynthesis via salvage pathway; L-methionine from S-methyl-5-thio-alpha-D-ribose 1-phosphate: step 3/6. It participates in amino-acid biosynthesis; L-methionine biosynthesis via salvage pathway; L-methionine from S-methyl-5-thio-alpha-D-ribose 1-phosphate: step 4/6. Functionally, bifunctional enzyme that catalyzes the enolization of 2,3-diketo-5-methylthiopentyl-1-phosphate (DK-MTP-1-P) into the intermediate 2-hydroxy-3-keto-5-methylthiopentenyl-1-phosphate (HK-MTPenyl-1-P), which is then dephosphorylated to form the acireductone 1,2-dihydroxy-3-keto-5-methylthiopentene (DHK-MTPene). The chain is Enolase-phosphatase E1 from Prochlorococcus marinus (strain MIT 9313).